Here is a 377-residue protein sequence, read N- to C-terminus: Enoyl reductase cheB (377 aa).

Residues G18 to V361 are enoyl reductase (ER) domain. C49–K52 contacts NADP(+). P137–G144 serves as a coordination point for substrate. Residues S173–V176, S200–N203, Y218, L265–E266, and T283 each bind NADP(+). Substrate is bound at residue G285 to I289. I354–S355 provides a ligand contact to NADP(+).

The protein belongs to the zinc-containing alcohol dehydrogenase family. The cofactor is heme.

Its pathway is secondary metabolite biosynthesis. Functionally, enoyl reductase; part of the gene cluster that mediates the biosynthesis of chaetoglobosin A which has a unique inhibitory activity against actin polymerization in mammalian cells. Chaetoglobosin A and its intermediates are involved in the morphological differentiation of C.globosum. The first step of the pathway is the synthesis of prochaetoglobosin I via condensation of one acetyl-CoA, 8 malonyl-CoA, and a L-tryptophan molecule by the PKS-NRPS hybrid synthetase cheA, followed by reduction of backbone double bond to install desired geometry by the enoyl reductase cheB. Further multiple oxidation steps performed by the cytochrome P450 monooxygenases cheE and cheG, as well as by the FAD-linked oxidoreductase cheF, lead to the formation of chaetoglobosin A. Depending on the order of action of these reductases, distinct intermediates can be identified. Within the pathway, the cytochrome P450 monooxygenase cheE catalyzes a stereospecific epoxidation on prochaetoglobosin I, cytoglobosin D, and chaetoglobosin J intermediates. The FAD-linked oxidoreductase cheF performs dehydrogenation of the C-20 hydroxyl groups in the 20-dihyrochaetoglobosin A and cytoglobosin D intermediates. Finally, the cytochrome P450 monooxygenase cheG can catalyze the stereospecific dihydroxylation of prochaetoglobosin I and prochaetoglobosin IV at C-19 and C-20, respectively. The Diels-Alderase cheD may play a role in the post-PKS-NRPS biosynthetic steps catalyzing Diels-Alder cyclization. In Chaetomium globosum (strain ATCC 6205 / CBS 148.51 / DSM 1962 / NBRC 6347 / NRRL 1970) (Soil fungus), this protein is Enoyl reductase cheB.